Here is a 311-residue protein sequence, read N- to C-terminus: Porphobilinogen deaminase (311 aa).

An S-(dipyrrolylmethanemethyl)cysteine modification is found at cysteine 241.

The protein belongs to the HMBS family. Monomer. Dipyrromethane is required as a cofactor.

The enzyme catalyses 4 porphobilinogen + H2O = hydroxymethylbilane + 4 NH4(+). It functions in the pathway porphyrin-containing compound metabolism; protoporphyrin-IX biosynthesis; coproporphyrinogen-III from 5-aminolevulinate: step 2/4. Its function is as follows. Tetrapolymerization of the monopyrrole PBG into the hydroxymethylbilane pre-uroporphyrinogen in several discrete steps. This is Porphobilinogen deaminase from Geobacillus sp. (strain WCH70).